The chain runs to 70 residues: Large ribosomal subunit protein eL38 (70 aa).

The protein belongs to the eukaryotic ribosomal protein eL38 family.

The polypeptide is Large ribosomal subunit protein eL38 (RpL38) (Drosophila melanogaster (Fruit fly)).